The following is a 289-amino-acid chain: Tachykinins (289 aa).

Positions 1 to 24 are cleaved as a signal peptide; that stretch reads MRPLSGLIALALLLLLLLTAPSSA. The interval 24-94 is disordered; sequence AADTETESSG…DEEADSSYAE (71 aa). Positions 25 to 47 are excised as a propeptide; it reads ADTETESSGSPLTPGAEEPRRVV. At arginine 59 the chain carries Arginine amide. Over residues 60 to 69 the composition is skewed to basic and acidic residues; that stretch reads GKKDEEHDTS. Residue asparagine 95 is modified to Asparagine amide. Arginine 110 bears the Arginine amide mark. A Valine amide modification is found at valine 153. Arginine 165, arginine 200, arginine 239, and arginine 281 each carry arginine amide. A propeptide spanning residues 285–289 is cleaved from the precursor; the sequence is PALFE.

It belongs to the tachykinin family. As to expression, strong expression is seen in a group of 14 cells plus one isolated cell in the midgut of stage 17 embryos. Also expressed in a pair of medially located unidentified cells, just posterior to the brain, and in two lateral groups of cells that may be associated with tracheae. Expression in the larval gut is restricted to cells with endocrine cell-like morphology in the posterior midgut, just anterior to the malphigian tubules. In the brain, expression is detected in a restricted number of neuronal cell bodies. Expression in the adult female gut is restricted to the midgut with no expression detected in the hindgut.

It localises to the secreted. Functionally, tachykinins are active peptides which excite neurons, evoke behavioral responses, are potent vasodilators and secretagogues, and contract (directly or indirectly) many smooth muscles. Stimulates gut muscle contractions. Required for the response to the male sex pheromone CH503 which is transferred from males to females during mating and inhibits courtship behavior by other males. The Gr68a gustatory receptor is required for detection of the pheromone and Gr68a-expressing neurons in the male foreleg relay signals to the suboesophageal zone (SEZ) which leads to courtship suppression through release of tachykinin from a cluster of 8-10 neurons in the SEZ. The chain is Tachykinins from Drosophila melanogaster (Fruit fly).